The primary structure comprises 186 residues: Elongation factor P (186 aa).

It belongs to the elongation factor P family.

It localises to the cytoplasm. It participates in protein biosynthesis; polypeptide chain elongation. In terms of biological role, involved in peptide bond synthesis. Stimulates efficient translation and peptide-bond synthesis on native or reconstituted 70S ribosomes in vitro. Probably functions indirectly by altering the affinity of the ribosome for aminoacyl-tRNA, thus increasing their reactivity as acceptors for peptidyl transferase. The polypeptide is Elongation factor P (Acidobacterium capsulatum (strain ATCC 51196 / DSM 11244 / BCRC 80197 / JCM 7670 / NBRC 15755 / NCIMB 13165 / 161)).